A 159-amino-acid chain; its full sequence is Ribosomal RNA large subunit methyltransferase H (159 aa).

S-adenosyl-L-methionine-binding positions include L76, G108, and 127–132 (FGLLTL).

Belongs to the RNA methyltransferase RlmH family. Homodimer.

It localises to the cytoplasm. The catalysed reaction is pseudouridine(1915) in 23S rRNA + S-adenosyl-L-methionine = N(3)-methylpseudouridine(1915) in 23S rRNA + S-adenosyl-L-homocysteine + H(+). Functionally, specifically methylates the pseudouridine at position 1915 (m3Psi1915) in 23S rRNA. This chain is Ribosomal RNA large subunit methyltransferase H, found in Streptococcus pyogenes serotype M5 (strain Manfredo).